The sequence spans 349 residues: Ion-translocating oxidoreductase complex subunit D (349 aa).

Transmembrane regions (helical) follow at residues 36 to 56 (CAFF…VALS), 77 to 99 (SAML…WMIV), and 124 to 144 (AMAA…SWIA). At threonine 185 the chain carries FMN phosphoryl threonine. Helical transmembrane passes span 212–232 (GTGV…LVLL), 239–259 (WHIS…GFLL), 265–285 (ASPL…FIAT), 291–311 (ATSP…VYVI), and 315–335 (GGYP…APFI).

Belongs to the NqrB/RnfD family. The complex is composed of six subunits: RnfA, RnfB, RnfC, RnfD, RnfE and RnfG. The cofactor is FMN.

It localises to the cell inner membrane. Part of a membrane-bound complex that couples electron transfer with translocation of ions across the membrane. This Shewanella sp. (strain MR-4) protein is Ion-translocating oxidoreductase complex subunit D.